Here is a 640-residue protein sequence, read N- to C-terminus: MAAGGTGGLREEQRYGLSCGRLGQDNITVLHVKLTETAIRALETYQSHKNLIPFRPSIQFQGLHGLVKIPKNDPLNEVHNFNFYLSNVGKDNPQGSFDCIQQTFSSSGASQLNCLGFIQDKITVCATNDSYQMTRERMTQAEEESRNRSTKVIKPGGPYVGKRVQIRKAPQAVSDTVPERKRSTPMNPANTIRKTHSSSTISQRPYRDRVIHLLALKAYKKPELLARLQKDGVNQKDKNSLGAILQQVANLNSKDLSYTLKDYVFKELQRDWPGYSEIDRRSLESVLSRKLNPSQNAAGTSRSESPVCSSRDAVSSPQKRLLDSEFIDPLMNKKARISHLTNRVPPTLNGHLNPTSEKSAAGLPLPPAAAAIPTPPPLPSTYLPISHPPQIVNSNSNSPSTPEGRGTQDLPVDSFSQNDSIYEDQQDKYTSRTSLETLPPGSVLLKCPKPMEENHSMSHKKSKKKSKKHKEKDQIKKHDIETIEEKEEDLKREEEIAKLNNSSPNSSGGVKEDCTASMEPSAIELPDYLIKYIAIVSYEQRQNYKDDFNAEYDEYRALHARMETVARRFIKLDAQRKRLSPGSKEYQNVHEEVLQEYQKIKQSSPNYHEEKYRCEYLHNKLAHIKRLIGEFDQQQAESWS.

3 disordered regions span residues 172 to 202 (AVSD…STIS), 290 to 320 (KLNP…PQKR), and 343 to 490 (RVPP…EEDL). 2 stretches are compositionally biased toward polar residues: residues 184–202 (TPMN…STIS) and 291–318 (LNPS…SSPQ). The span at 360 to 372 (AAGLPLPPAAAAI) shows a compositional bias: low complexity. Polar residues predominate over residues 391–401 (IVNSNSNSPST). Residues 457–470 (MSHKKSKKKSKKHK) show a composition bias toward basic residues. Residues 471–490 (EKDQIKKHDIETIEEKEEDL) show a composition bias toward basic and acidic residues. Residues Ser-503 and Ser-580 each carry the phosphoserine modification. The OCEL domain maps to 526–636 (PDYLIKYIAI…LIGEFDQQQA (111 aa)).

The protein belongs to the ELL/occludin family. As to quaternary structure, component of the super elongation complex (SEC), at least composed of EAF1, EAF2, CDK9, MLLT3/AF9, AFF (AFF1 or AFF4), the P-TEFb complex and ELL (ELL, ELL2 or ELL3). Component of the little elongation complex (LEC), at least composed of ELL (ELL, ELL2 or ELL3), ZC3H8, ICE1 and ICE2. Interacts with AFF4; the interaction is direct and leads to stabilize ELL2 and prevent ELL2 ubiquitination. Interacts with EAF1 and EAF2. Ubiquitinated by SIAH1, leading to its degradation by the proteasome. Interaction with AFF4 stabilizes ELL2 and prevents ELL2 ubiquitination.

The protein localises to the nucleus. Elongation factor component of the super elongation complex (SEC), a complex required to increase the catalytic rate of RNA polymerase II transcription by suppressing transient pausing by the polymerase at multiple sites along the DNA. Component of the little elongation complex (LEC), a complex required to regulate small nuclear RNA (snRNA) gene transcription by RNA polymerase II and III. Plays a role in immunoglobulin secretion in plasma cells: directs efficient alternative mRNA processing, influencing both proximal poly(A) site choice and exon skipping, as well as immunoglobulin heavy chain (IgH) alternative processing. Probably acts by regulating histone modifications accompanying transition from membrane-specific to secretory IgH mRNA expression. In Homo sapiens (Human), this protein is RNA polymerase II elongation factor ELL2 (ELL2).